Consider the following 228-residue polypeptide: UPF0758 protein MW1604 (228 aa).

One can recognise an MPN domain in the interval 102 to 224; the sequence is KITQPSDVAD…FTSLVEAGYF (123 aa). Positions 173, 175, and 186 each coordinate Zn(2+). The JAMM motif signature appears at 173–186; the sequence is HNHPSGDVTPSQED.

This sequence belongs to the UPF0758 family.

This Staphylococcus aureus (strain MW2) protein is UPF0758 protein MW1604.